The sequence spans 417 residues: Serine hydroxymethyltransferase (417 aa).

(6S)-5,6,7,8-tetrahydrofolate contacts are provided by residues L121 and 125 to 127; that span reads GHL. The residue at position 229 (K229) is an N6-(pyridoxal phosphate)lysine. 355–357 is a binding site for (6S)-5,6,7,8-tetrahydrofolate; it reads SPF.

This sequence belongs to the SHMT family. In terms of assembly, homodimer. Pyridoxal 5'-phosphate serves as cofactor.

Its subcellular location is the cytoplasm. It catalyses the reaction (6R)-5,10-methylene-5,6,7,8-tetrahydrofolate + glycine + H2O = (6S)-5,6,7,8-tetrahydrofolate + L-serine. Its pathway is one-carbon metabolism; tetrahydrofolate interconversion. The protein operates within amino-acid biosynthesis; glycine biosynthesis; glycine from L-serine: step 1/1. Catalyzes the reversible interconversion of serine and glycine with tetrahydrofolate (THF) serving as the one-carbon carrier. This reaction serves as the major source of one-carbon groups required for the biosynthesis of purines, thymidylate, methionine, and other important biomolecules. Also exhibits THF-independent aldolase activity toward beta-hydroxyamino acids, producing glycine and aldehydes, via a retro-aldol mechanism. In Proteus mirabilis (strain HI4320), this protein is Serine hydroxymethyltransferase.